Here is a 100-residue protein sequence, read N- to C-terminus: Integration host factor subunit alpha (100 aa).

Positions 53 to 73 (FDLRDKRQRPGRNPKTGEEIP) are disordered.

The protein belongs to the bacterial histone-like protein family. As to quaternary structure, heterodimer of an alpha and a beta chain.

Functionally, this protein is one of the two subunits of integration host factor, a specific DNA-binding protein that functions in genetic recombination as well as in transcriptional and translational control. This Pseudomonas aeruginosa (strain LESB58) protein is Integration host factor subunit alpha.